The chain runs to 449 residues: Exodeoxyribonuclease 7 large subunit (449 aa).

The protein belongs to the XseA family. Heterooligomer composed of large and small subunits.

Its subcellular location is the cytoplasm. The catalysed reaction is Exonucleolytic cleavage in either 5'- to 3'- or 3'- to 5'-direction to yield nucleoside 5'-phosphates.. Bidirectionally degrades single-stranded DNA into large acid-insoluble oligonucleotides, which are then degraded further into small acid-soluble oligonucleotides. The chain is Exodeoxyribonuclease 7 large subunit from Aliivibrio fischeri (strain ATCC 700601 / ES114) (Vibrio fischeri).